Here is a 565-residue protein sequence, read N- to C-terminus: Probable serine/threonine-protein kinase abkA (565 aa).

Residues 44–77 (NNNNISLKDKFKDLKDLKDNLNEKKINNDNDDDD) adopt a coiled-coil conformation. The region spanning 231 to 565 (LFQDDPIAAA…FKNIFYKNYK (335 aa)) is the Protein kinase domain. ATP contacts are provided by residues 237-245 (IAAASIGQV) and Lys-259. Asp-401 functions as the Proton acceptor in the catalytic mechanism.

This sequence belongs to the protein kinase superfamily. ADCK protein kinase family.

The polypeptide is Probable serine/threonine-protein kinase abkA (abkA) (Dictyostelium discoideum (Social amoeba)).